Consider the following 208-residue polypeptide: Imidazoleglycerol-phosphate dehydratase (208 aa).

The tract at residues 1 to 22 (MTRRAAVKAPRAGAAARRGSVA) is disordered. Residues 7–19 (VKAPRAGAAARRG) show a composition bias toward low complexity.

The protein belongs to the imidazoleglycerol-phosphate dehydratase family.

The protein localises to the cytoplasm. The enzyme catalyses D-erythro-1-(imidazol-4-yl)glycerol 3-phosphate = 3-(imidazol-4-yl)-2-oxopropyl phosphate + H2O. It functions in the pathway amino-acid biosynthesis; L-histidine biosynthesis; L-histidine from 5-phospho-alpha-D-ribose 1-diphosphate: step 6/9. This chain is Imidazoleglycerol-phosphate dehydratase, found in Anaeromyxobacter dehalogenans (strain 2CP-C).